A 245-amino-acid polypeptide reads, in one-letter code: 5-oxoprolinase subunit A (245 aa).

This sequence belongs to the LamB/PxpA family. Forms a complex composed of PxpA, PxpB and PxpC.

It catalyses the reaction 5-oxo-L-proline + ATP + 2 H2O = L-glutamate + ADP + phosphate + H(+). Its function is as follows. Catalyzes the cleavage of 5-oxoproline to form L-glutamate coupled to the hydrolysis of ATP to ADP and inorganic phosphate. The sequence is that of 5-oxoprolinase subunit A from Yersinia pseudotuberculosis serotype O:1b (strain IP 31758).